A 169-amino-acid chain; its full sequence is UPF0303 protein BOV_1367 (169 aa).

It belongs to the UPF0303 family.

The protein is UPF0303 protein BOV_1367 of Brucella ovis (strain ATCC 25840 / 63/290 / NCTC 10512).